Here is a 56-residue protein sequence, read N- to C-terminus: Calsequestrin-1 (56 aa).

Y9 is modified (phosphotyrosine). Position 47 is a phosphoserine (S47).

This sequence belongs to the calsequestrin family. Monomer; increases in response to a depletion of intracellular calcium. Homodimer. Homotetramer and homopolymer. Can form linear homooligomers. Ca(2+) ions promote oligomerization. Interacts (via C-terminal end and preferentially with the monomeric form) with STIM1; this interaction increases in response to a depletion of intracellular calcium, decreases both STIM1 aggregation and clustering, interaction of STIM1 with ORAI1 and store-operated Ca(2+) entry (SOCE) activity. Interacts with ASPH and TRDN. Post-translationally, N-glycosylated.

The protein localises to the endoplasmic reticulum. It is found in the sarcoplasmic reticulum. Its subcellular location is the sarcoplasmic reticulum lumen. It localises to the sarcoplasmic reticulum membrane. The protein resides in the mitochondrion matrix. Calsequestrin is a high-capacity, moderate affinity, calcium-binding protein and thus acts as an internal calcium store in muscle. Calcium ions are bound by clusters of acidic residues at the protein surface, often at the interface between subunits. Can bind around 80 Ca(2+) ions. Regulates the release of lumenal Ca(2+) via the calcium release channel RYR1; this plays an important role in triggering muscle contraction. Negatively regulates store-operated Ca(2+) entry (SOCE) activity. In Canis lupus familiaris (Dog), this protein is Calsequestrin-1 (CASQ1).